A 209-amino-acid chain; its full sequence is Uracil phosphoribosyltransferase (209 aa).

Residues Arg79, Arg104, and 131–139 (DPMLATGGS) each bind 5-phospho-alpha-D-ribose 1-diphosphate. Residues Ile194 and 199 to 201 (GDA) each bind uracil. Asp200 contributes to the 5-phospho-alpha-D-ribose 1-diphosphate binding site.

It belongs to the UPRTase family. Requires Mg(2+) as cofactor.

The catalysed reaction is UMP + diphosphate = 5-phospho-alpha-D-ribose 1-diphosphate + uracil. It functions in the pathway pyrimidine metabolism; UMP biosynthesis via salvage pathway; UMP from uracil: step 1/1. With respect to regulation, allosterically activated by GTP. Functionally, catalyzes the conversion of uracil and 5-phospho-alpha-D-ribose 1-diphosphate (PRPP) to UMP and diphosphate. This Latilactobacillus sakei (Lactobacillus sakei) protein is Uracil phosphoribosyltransferase.